A 444-amino-acid chain; its full sequence is L-cysteine:1D-myo-inositol 2-amino-2-deoxy-alpha-D-glucopyranoside ligase (444 aa).

A compositionally biased stretch (basic and acidic residues) spans M1–H13. Residues M1 to H21 form a disordered region. C75 lines the Zn(2+) pocket. L-cysteinyl-5'-AMP contacts are provided by residues C75–T78, T90, and N113–T115. Positions I77–H87 match the 'HIGH' region motif. The 'ERGGDP' region motif lies at E219–P224. L-cysteinyl-5'-AMP is bound at residue W259. Zn(2+) is bound at residue C263. L-cysteinyl-5'-AMP is bound at residue G281–D283. H288 contacts Zn(2+). Residue I315 coordinates L-cysteinyl-5'-AMP. Positions K321–S325 match the 'KMSKS' region motif.

Belongs to the class-I aminoacyl-tRNA synthetase family. MshC subfamily. As to quaternary structure, monomer. Requires Zn(2+) as cofactor.

The catalysed reaction is 1D-myo-inositol 2-amino-2-deoxy-alpha-D-glucopyranoside + L-cysteine + ATP = 1D-myo-inositol 2-(L-cysteinylamino)-2-deoxy-alpha-D-glucopyranoside + AMP + diphosphate + H(+). Its function is as follows. Catalyzes the ATP-dependent condensation of GlcN-Ins and L-cysteine to form L-Cys-GlcN-Ins. The polypeptide is L-cysteine:1D-myo-inositol 2-amino-2-deoxy-alpha-D-glucopyranoside ligase (Mycolicibacterium gilvum (strain PYR-GCK) (Mycobacterium gilvum (strain PYR-GCK))).